Here is a 260-residue protein sequence, read N- to C-terminus: Transmembrane protein 106C (260 aa).

Glycine 2 is lipidated: N-myristoyl glycine. The helical transmembrane segment at 85 to 105 (YVLLSVLLCLLASGLVFFFLF) threads the bilayer. A glycan (N-linked (GlcNAc...) asparagine) is linked at asparagine 171. The chain crosses the membrane as a helical span at residues 196 to 216 (SYVYFYCTLPAILVHNIVIFM).

The protein belongs to the TMEM106 family. As to quaternary structure, interacts with TMEM106B.

Its subcellular location is the endoplasmic reticulum membrane. The protein resides in the membrane. This is Transmembrane protein 106C (Tmem106c) from Rattus norvegicus (Rat).